Reading from the N-terminus, the 330-residue chain is MKTAYIAKQRQISFVKSHFSRQLEERLGLIEVQAPILSRVGDGTQDNLSGCEKAVQVKVKALPDAQFEVVHSLAKWKRQTLGQHDFSAGEGLYTHMKALRPDEDRLSPLHSVYVDQWDWERVMGDGERQFSTLKSTVEAIWAGIKATEAAVSEEFGLAPFLPDQIHFVHSQELLSRYPDLDAKGRERAIAKDLGAVFLVGIGGKLSDGHRHDVRAPDYDDWSTPSELGHAGLNGDILVWNPVLEDAFELSSMGIRVDADTLKHQLALTGDEDRLQLEWHQALLRGEMPQTIGGGIGQSRLTMLLLQLPHIGQVQCGVWPAAVRENVPSLL.

Belongs to the class-II aminoacyl-tRNA synthetase family. AsnA subfamily.

The protein resides in the cytoplasm. The catalysed reaction is L-aspartate + NH4(+) + ATP = L-asparagine + AMP + diphosphate + H(+). It participates in amino-acid biosynthesis; L-asparagine biosynthesis; L-asparagine from L-aspartate (ammonia route): step 1/1. The sequence is that of Aspartate--ammonia ligase from Shigella sonnei (strain Ss046).